Reading from the N-terminus, the 624-residue chain is Exocyst complex component EXO70B1 (624 aa).

The tract at residues 148–176 (FGLNPQGDAGAMNHRFDSEEEEDDDRDFN) is disordered.

The protein belongs to the EXO70 family. Interacts with EXO70B2, SEC5A and EXO84B. Binds to PUB18. Binds directly to B1L at the plasma membrane and in small vesicles. In terms of processing, target of the E3 ubiquitin-protein ligase PUB18 that mediates its ubiquitination and degradation via the 26S proteasome.

Its subcellular location is the cytoplasmic vesicle. The protein localises to the phagosome. It is found in the endomembrane system. The protein resides in the cell membrane. It localises to the vesicle. Its function is as follows. Component of an exocyst subcomplex specifically involved in autophagy-related, Golgi-independent membrane traffic to the vacuole. Regulates autophagosome formation and autophagy-related Golgi-independent import into the vacuole. Positive regulator of both abscisic acid (ABA)-promoted and mannitol (drought)-promoted stomatal closure. Involved in the regulation of lateral root formation. This Arabidopsis thaliana (Mouse-ear cress) protein is Exocyst complex component EXO70B1.